A 143-amino-acid polypeptide reads, in one-letter code: Large ribosomal subunit protein mL51 (143 aa).

A mitochondrion-targeting transit peptide spans 1–52; sequence MAALVRGLMRRVAALPQAVRSVSGGGQRHEPYRPLPITSPLAGLPRNFRVRE.

It belongs to the mitochondrion-specific ribosomal protein mL51 family. As to quaternary structure, component of the mitochondrial ribosome large subunit (39S) which comprises a 16S rRNA and about 50 distinct proteins.

The protein localises to the mitochondrion. In Gallus gallus (Chicken), this protein is Large ribosomal subunit protein mL51 (MRPL51).